Here is a 191-residue protein sequence, read N- to C-terminus: Photosystem I assembly protein Ycf4 (191 aa).

A run of 2 helical transmembrane segments spans residues 33–53 (LLAV…LSSY) and 74–94 (LVMG…WAMI).

It belongs to the Ycf4 family.

It is found in the cellular thylakoid membrane. Its function is as follows. Seems to be required for the assembly of the photosystem I complex. The chain is Photosystem I assembly protein Ycf4 from Prochlorococcus marinus (strain MIT 9303).